A 252-amino-acid polypeptide reads, in one-letter code: Thiazole synthase (252 aa).

Lys91 acts as the Schiff-base intermediate with DXP in catalysis. 1-deoxy-D-xylulose 5-phosphate-binding positions include Gly152, 179–180 (AG), and 201–202 (NT).

Belongs to the ThiG family. In terms of assembly, homotetramer. Forms heterodimers with either ThiH or ThiS.

It is found in the cytoplasm. It catalyses the reaction [ThiS sulfur-carrier protein]-C-terminal-Gly-aminoethanethioate + 2-iminoacetate + 1-deoxy-D-xylulose 5-phosphate = [ThiS sulfur-carrier protein]-C-terminal Gly-Gly + 2-[(2R,5Z)-2-carboxy-4-methylthiazol-5(2H)-ylidene]ethyl phosphate + 2 H2O + H(+). The protein operates within cofactor biosynthesis; thiamine diphosphate biosynthesis. Functionally, catalyzes the rearrangement of 1-deoxy-D-xylulose 5-phosphate (DXP) to produce the thiazole phosphate moiety of thiamine. Sulfur is provided by the thiocarboxylate moiety of the carrier protein ThiS. In vitro, sulfur can be provided by H(2)S. This chain is Thiazole synthase, found in Erwinia amylovora (Fire blight bacteria).